Here is a 667-residue protein sequence, read N- to C-terminus: Fatty acyl-CoA synthetase A (667 aa).

Belongs to the ATP-dependent AMP-binding enzyme family.

It localises to the endosome membrane. It catalyses the reaction a long-chain fatty acid + ATP + CoA = a long-chain fatty acyl-CoA + AMP + diphosphate. In terms of biological role, long chain fatty acid acyl-CoA synthetases catalyze the formation of a thiester bond between a free fatty acid and coenzyme A during fatty acid metabolic process. May mediate fatty acid retrieval from the lumen of endosomes into the cytoplasm. This Dictyostelium discoideum (Social amoeba) protein is Fatty acyl-CoA synthetase A (fcsA).